Here is a 92-residue protein sequence, read N- to C-terminus: Large ribosomal subunit protein uL23c (92 aa).

The protein belongs to the universal ribosomal protein uL23 family. In terms of assembly, part of the 50S ribosomal subunit.

Its subcellular location is the plastid. The protein localises to the chloroplast. In terms of biological role, binds to 23S rRNA. In Chara vulgaris (Common stonewort), this protein is Large ribosomal subunit protein uL23c (rpl23).